The chain runs to 451 residues: uncharacterized protein (451 aa).

Disordered regions lie at residues 89 to 150 (PRLS…ISRY) and 164 to 222 (QVGE…KTFG). Positions 104–121 (QKPTISRESFVWESSASI) are enriched in polar residues. Positions 137–147 (SSTPSIEPESI) are enriched in low complexity. Positions 175–222 (RAADSENERRPSEVREAPESRRRRETSETGSDKSKAPPPIKEIKKTFG) are enriched in basic and acidic residues. A helical transmembrane segment spans residues 358 to 376 (LIGLMLFQTTIFIISKIIA). Residues 401–451 (RNGSSSGFASGTSSPLVFIPRTKRPSLVPSEKKMRGPSVTRDLAAEQERDA) form a disordered region. Positions 403 to 414 (GSSSGFASGTSS) are enriched in low complexity.

Belongs to the IIV-6 067R family.

Its subcellular location is the membrane. This is an uncharacterized protein from Invertebrate iridescent virus 3 (IIV-3).